Consider the following 581-residue polypeptide: Zinc finger protein 319 (581 aa).

A compositionally biased stretch (low complexity) spans Met-1–Gln-22. Positions Met-1 to Gly-39 are disordered. The C2H2-type 1 zinc-finger motif lies at Pro-75–His-99. The C2H2-type 2; degenerate zinc-finger motif lies at Phe-103–Gln-125. Lys-129 participates in a covalent cross-link: Glycyl lysine isopeptide (Lys-Gly) (interchain with G-Cter in SUMO2). 4 consecutive C2H2-type zinc fingers follow at residues Phe-131–His-153, Tyr-201–His-223, Tyr-229–His-251, and Tyr-257–His-279. Residue Ser-280 is modified to Phosphoserine. Residues Phe-286–Pro-308 form a C2H2-type 7; degenerate zinc finger. 3 C2H2-type zinc fingers span residues Phe-314–His-336, Phe-342–His-364, and Phe-370–His-392. The C2H2-type 11; degenerate zinc-finger motif lies at Phe-398–Pro-420. A C2H2-type 12 zinc finger spans residues Phe-427–His-449. The C2H2-type 13; degenerate zinc-finger motif lies at Leu-457–Pro-479. 3 consecutive C2H2-type zinc fingers follow at residues Leu-485 to His-507, Tyr-513 to His-535, and Phe-541 to His-563.

Belongs to the krueppel C2H2-type zinc-finger protein family.

The protein localises to the nucleus. Functionally, may be involved in transcriptional regulation. The protein is Zinc finger protein 319 (Znf319) of Mus musculus (Mouse).